Here is a 522-residue protein sequence, read N- to C-terminus: O-fucosyltransferase 38 (522 aa).

A helical; Signal-anchor for type II membrane protein transmembrane segment spans residues 26 to 46 (AISLYLIFVFAFTIWVLVFSS). The segment covering 54-67 (DHTKHQQQHHRDLI) has biased composition (basic and acidic residues). Positions 54–73 (DHTKHQQQHHRDLIDSESFP) are disordered. An N-linked (GlcNAc...) asparagine glycan is attached at N147. 284–286 (HLR) is a substrate binding site. N-linked (GlcNAc...) asparagine glycosylation occurs at N325. A disordered region spans residues 475–496 (HKDRQGAPRRRKGPTQGIKGRA).

This sequence belongs to the glycosyltransferase GT106 family.

The protein resides in the membrane. It participates in glycan metabolism. This chain is O-fucosyltransferase 38, found in Arabidopsis thaliana (Mouse-ear cress).